The following is a 96-amino-acid chain: Large ribosomal subunit protein bL27 (96 aa).

Residues 1–10 (MLLKLNIQLF) constitute a propeptide that is removed on maturation.

Belongs to the bacterial ribosomal protein bL27 family. Post-translationally, the N-terminus is cleaved by ribosomal processing cysteine protease Prp.

The sequence is that of Large ribosomal subunit protein bL27 from Phytoplasma mali (strain AT).